The chain runs to 1294 residues: CLIP-associating protein 2 (1294 aa).

Positions 1–61 are disordered; the sequence is MAMGDDKSFD…KVGGASKEGG (61 aa). Phosphoserine is present on residues S8 and S14. Over residues 47–61 the composition is skewed to gly residues; sequence SAGGPKVGGASKEGG. The tract at residues 60 to 311 is TOG 1; that stretch reads GGAGAVDEDD…KSLQTYLKSS (252 aa). HEAT repeat units follow at residues 173–208, 209–245, and 250–287; these read HGAE…IRHT, HVPR…EWQT, and RHAA…HFPG. The tract at residues 314 to 368 is disordered; sequence VASLPQSDRSSSSSQESLNRPFSSKWSTANPSTVAGRVSAGSSKASSLPGSLQRS. Phosphoserine occurs at positions 316, 327, and 330. The span at 316-334 shows a compositional bias: low complexity; that stretch reads SLPQSDRSSSSSQESLNRP. Composition is skewed to polar residues over residues 335–346 and 353–367; these read FSSKWSTANPST and AGSS…SLQR. Residues S360, S368, S370, and S407 each carry the phosphoserine modification. Positions 409–467 are disordered; the sequence is EDTSDKLDGTASEDGRVRAKLSAPLAGMGNAKADSRGRSRTKMVSQSQPGSRSGSPGRV. Residues 411–425 are compositionally biased toward basic and acidic residues; it reads TSDKLDGTASEDGRV. Residues 444 to 580 form an interaction with microtubules, MAPRE1 and MAPRE3 region; the sequence is RGRSRTKMVS…GPGYGISQSS (137 aa). Over residues 453 to 467 the composition is skewed to low complexity; the sequence is SQSQPGSRSGSPGRV. Phosphoserine occurs at positions 455, 459, 463, 478, and 489. The segment at 488 to 557 is disordered; sequence ASAQKRSKIP…PLASRHHSRS (70 aa). The SXIP motif 1; mediates interaction with MAPRE1 and targeting to microtubule plus ends signature appears at 494–497; sequence SKIP. Residue S507 is modified to Phosphoserine. The short motif at 517-520 is the SXIP motif 2; mediates interaction with MAPRE1 and targeting to microtubule plus ends element; it reads SRIP. S525, S529, S585, S587, S596, S621, and S627 each carry phosphoserine. The segment at 617 to 645 is disordered; sequence YGMHSDDDANSDASSACSERSYSSRNGSI. Positions 627-641 are enriched in low complexity; sequence SDASSACSERSYSSR. A TOG 2 region spans residues 649 to 881; the sequence is MRQTEDVAEV…TKLLHNHLRN (233 aa). HEAT repeat units lie at residues 710-747 and 772-809; these read RVFS…KMGA and LQFN…QMDP. Phosphothreonine is present on T787. Residues 872–1294 form an interaction with RSN and localization to the Golgi and kinetochores region; that stretch reads TKLLHNHLRN…DPTTDVSGQS (423 aa). Disordered regions lie at residues 878–928 and 952–995; these read HLRN…FDYD and SFRS…DSSQ. Composition is skewed to polar residues over residues 880–892 and 901–922; these read RNTG…SMGS and SPAN…TLSP. Phosphoserine is present on S892. S952, S955, S1013, and S1029 each carry phosphoserine. The span at 955–972 shows a compositional bias: basic and acidic residues; the sequence is SQEDMNEPLKRDSKKDDG. The tract at residues 1017–1294 is required for cortical localization; it reads RDYNPYNYSD…DPTTDVSGQS (278 aa). HEAT repeat units follow at residues 1054–1091, 1098–1135, and 1216–1253; these read LDHS…TQEE, EHFK…HQPA, and LLLP…VIGD.

Belongs to the CLASP family. In terms of assembly, interacts with microtubules. Interacts with MAPRE1; probably required for targeting to the growing microtubule plus ends. Interacts with CLIP2, ERC1, MAPRE3, PHLDB2 and RSN. The interaction with ERC1 may be mediated by PHLDB2. Interacts with GCC2; recruits CLASP2 to Golgi membranes. Interacts with MACF1. Interacts with mtcl2 and MTCL1. Phosphorylated by GSK3B. Phosphorylation reduces MAPRE1 binding. Phosphorylation by GSK3B may negatively regulate binding to microtubule lattices in lamella. As to expression, brain-specific.

The protein localises to the cytoplasm. Its subcellular location is the cytoskeleton. The protein resides in the microtubule organizing center. It localises to the centrosome. It is found in the chromosome. The protein localises to the centromere. Its subcellular location is the kinetochore. The protein resides in the spindle. It localises to the golgi apparatus. It is found in the trans-Golgi network. The protein localises to the cell membrane. Its subcellular location is the cell projection. The protein resides in the ruffle membrane. It localises to the cell cortex. Functionally, microtubule plus-end tracking protein that promotes the stabilization of dynamic microtubules. Involved in the nucleation of noncentrosomal microtubules originating from the trans-Golgi network (TGN). Required for the polarization of the cytoplasmic microtubule arrays in migrating cells towards the leading edge of the cell. May act at the cell cortex to enhance the frequency of rescue of depolymerizing microtubules by attaching their plus-ends to cortical platforms composed of ERC1 and PHLDB2. This cortical microtubule stabilizing activity is regulated at least in part by phosphatidylinositol 3-kinase signaling. Also performs a similar stabilizing function at the kinetochore which is essential for the bipolar alignment of chromosomes on the mitotic spindle. Acts as a mediator of ERBB2-dependent stabilization of microtubules at the cell cortex. The polypeptide is CLIP-associating protein 2 (CLASP2) (Homo sapiens (Human)).